The sequence spans 195 residues: Molybdenum cofactor guanylyltransferase (195 aa).

Residues 10-12, Lys-23, Asn-51, Asp-69, and Asp-99 contribute to the GTP site; that span reads LAG. Asp-99 contributes to the Mg(2+) binding site.

It belongs to the MobA family. As to quaternary structure, monomer. Mg(2+) is required as a cofactor.

It localises to the cytoplasm. The catalysed reaction is Mo-molybdopterin + GTP + H(+) = Mo-molybdopterin guanine dinucleotide + diphosphate. Functionally, transfers a GMP moiety from GTP to Mo-molybdopterin (Mo-MPT) cofactor (Moco or molybdenum cofactor) to form Mo-molybdopterin guanine dinucleotide (Mo-MGD) cofactor. The chain is Molybdenum cofactor guanylyltransferase from Histophilus somni (strain 2336) (Haemophilus somnus).